We begin with the raw amino-acid sequence, 437 residues long: Cytochrome b (437 aa).

Residues 45-65 (WIWGIVLAFTLVLQIVTGIVL) traverse the membrane as a helical segment. 2 residues coordinate heme b: histidine 97 and histidine 111. 9 consecutive transmembrane segments (helical) span residues 100 to 120 (GASLFFLAVYIHIFRGLYYGS), 129 to 149 (WIVGMVIYLLMMGTAFMGYVL), 156 to 176 (FWGATVITGLFGAIPGIGPSI), 194 to 214 (FFSLHYLLPFVIAALVAIHIW), 248 to 268 (FVIKDLFALALVLLGFFAVVA), 298 to 318 (FLPFYAILRAFAADVWVVILV), 330 to 350 (FFGVIAMFGAIAVMALAPWLD), 365 to 385 (MWFWFLVLDFVVLTWVGAMPT), and 391 to 411 (WISLIASTYWFAYFLVILPLL). Heme b-binding residues include histidine 198 and histidine 212.

It belongs to the cytochrome b family. The main subunits of complex b-c1 are: cytochrome b, cytochrome c1 and the Rieske protein. It depends on heme b as a cofactor.

The protein localises to the cell membrane. Component of the ubiquinol-cytochrome c reductase complex (complex III or cytochrome b-c1 complex), which is a respiratory chain that generates an electrochemical potential coupled to ATP synthesis. This chain is Cytochrome b (petB), found in Rhodobacter capsulatus (strain ATCC BAA-309 / NBRC 16581 / SB1003).